The chain runs to 631 residues: Mu-like prophage FluMu protein gp42 (631 aa).

2 consecutive transmembrane segments (helical) span residues 56–76 and 385–405; these read LGNI…TMVG and GLAD…PVYV. The interval 425–453 is disordered; the sequence is IEDGRDKDKKTQKKNKPPRPKRGRGSVRS. Residues 434–449 are compositionally biased toward basic residues; it reads KTQKKNKPPRPKRGRG. The next 3 membrane-spanning stretches (helical) occupy residues 455–475, 495–515, and 543–563; these read VAAV…VTTA, SKAV…TVLM, and ALIP…GWLG.

It to phage Mu protein gp42.

The protein resides in the cell membrane. The polypeptide is Mu-like prophage FluMu protein gp42 (Haemophilus influenzae (strain ATCC 51907 / DSM 11121 / KW20 / Rd)).